A 191-amino-acid chain; its full sequence is Early nodulin-like protein 8 (191 aa).

A signal peptide spans 1–22; sequence MGVMSLSKTMVVVVLQVMILLG. Residues 31–133 form the Phytocyanin domain; the sequence is TLYKVGDLDA…YQKLLVSVGT (103 aa). The cysteines at positions 87 and 121 are disulfide-linked. Residues Asn-104 and Asn-108 are each glycosylated (N-linked (GlcNAc...) asparagine). Ser-165 carries GPI-anchor amidated serine lipidation. The propeptide at 166-191 is removed in mature form; sequence SASSSLISAFSTVAASLACAVVGAIM.

It belongs to the early nodulin-like (ENODL) family. In terms of tissue distribution, mostly expressed in seedlings and roots, and, to a lower extent, in leaves, flowers, stems and seeds.

Its subcellular location is the cell membrane. Functionally, may act as a carbohydrate transporter. The chain is Early nodulin-like protein 8 from Arabidopsis thaliana (Mouse-ear cress).